A 119-amino-acid polypeptide reads, in one-letter code: Small ribosomal subunit protein uS13 (119 aa).

The tract at residues 90–119 is disordered; sequence IRHRRGLPLRGQRTRSNARTRKGKRKPIRS. Residues 91–119 are compositionally biased toward basic residues; the sequence is RHRRGLPLRGQRTRSNARTRKGKRKPIRS.

This sequence belongs to the universal ribosomal protein uS13 family. Part of the 30S ribosomal subunit. Forms a loose heterodimer with protein S19. Forms two bridges to the 50S subunit in the 70S ribosome.

In terms of biological role, located at the top of the head of the 30S subunit, it contacts several helices of the 16S rRNA. In the 70S ribosome it contacts the 23S rRNA (bridge B1a) and protein L5 of the 50S subunit (bridge B1b), connecting the 2 subunits; these bridges are implicated in subunit movement. Contacts the tRNAs in the A and P-sites. In Coxiella burnetii (strain CbuK_Q154) (Coxiella burnetii (strain Q154)), this protein is Small ribosomal subunit protein uS13.